The sequence spans 182 residues: NADH-quinone oxidoreductase subunit I (182 aa).

2 4Fe-4S ferredoxin-type domains span residues 52-82 (LTRD…LQKA) and 92-121 (DFFR…LTPD). Residues Cys62, Cys65, Cys68, Cys72, Cys101, Cys104, Cys107, and Cys111 each contribute to the [4Fe-4S] cluster site.

This sequence belongs to the complex I 23 kDa subunit family. NDH-1 is composed of 13 different subunits. Subunits NuoA, H, J, K, L, M, N constitute the membrane sector of the complex. [4Fe-4S] cluster is required as a cofactor.

The protein resides in the cell inner membrane. It catalyses the reaction a quinone + NADH + 5 H(+)(in) = a quinol + NAD(+) + 4 H(+)(out). In terms of biological role, NDH-1 shuttles electrons from NADH, via FMN and iron-sulfur (Fe-S) centers, to quinones in the respiratory chain. The immediate electron acceptor for the enzyme in this species is believed to be ubiquinone. Couples the redox reaction to proton translocation (for every two electrons transferred, four hydrogen ions are translocated across the cytoplasmic membrane), and thus conserves the redox energy in a proton gradient. The chain is NADH-quinone oxidoreductase subunit I from Pseudomonas syringae pv. tomato (strain ATCC BAA-871 / DC3000).